We begin with the raw amino-acid sequence, 298 residues long: Acetyl-coenzyme A carboxylase carboxyl transferase subunit beta (298 aa).

Residues 1–21 (MNQEVKSGKVLSPSTPWTQRP) form a disordered region. Residues 20–67 (RPVPGIEVADEQQTLKATFTEPTIECPECHALVTRTAISFNAYVCPQC) form a C4-type zinc finger. A CoA carboxyltransferase N-terminal domain is found at 41 to 298 (PTIECPECHA…RLVSKLMNLP (258 aa)). Zn(2+)-binding residues include Cys-45, Cys-48, Cys-64, and Cys-67.

Belongs to the AccD/PCCB family. As to quaternary structure, acetyl-CoA carboxylase is a heterohexamer composed of biotin carboxyl carrier protein (AccB), biotin carboxylase (AccC) and two subunits each of ACCase subunit alpha (AccA) and ACCase subunit beta (AccD). The cofactor is Zn(2+).

It localises to the cytoplasm. It carries out the reaction N(6)-carboxybiotinyl-L-lysyl-[protein] + acetyl-CoA = N(6)-biotinyl-L-lysyl-[protein] + malonyl-CoA. Its pathway is lipid metabolism; malonyl-CoA biosynthesis; malonyl-CoA from acetyl-CoA: step 1/1. Functionally, component of the acetyl coenzyme A carboxylase (ACC) complex. Biotin carboxylase (BC) catalyzes the carboxylation of biotin on its carrier protein (BCCP) and then the CO(2) group is transferred by the transcarboxylase to acetyl-CoA to form malonyl-CoA. This is Acetyl-coenzyme A carboxylase carboxyl transferase subunit beta from Acinetobacter baumannii (strain SDF).